The sequence spans 278 residues: Fasciclin-like arabinogalactan protein 5 (278 aa).

An N-terminal signal peptide occupies residues 1–24 (MGLKASLSLLSLTILLVFSKVVTA). The region spanning 25–169 (NNITLAFQKY…LSIIQITMPI (145 aa)) is the FAS1 domain. N-linked (GlcNAc...) asparagine glycosylation is found at N26, N74, N126, and N159. Residues 199-257 (VVPAPGPAADDNSPDSAVPKTPPAPATDTPEADSPAPAPSADNEKIEAADKAKPSSSAS) form a disordered region. The span at 224–239 (ATDTPEADSPAPAPSA) shows a compositional bias: low complexity. The span at 240-251 (DNEKIEAADKAK) shows a compositional bias: basic and acidic residues. S255 carries the GPI-anchor amidated serine lipid modification. A propeptide spans 256-278 (ASKAGWSFDVILLLAFLASFAGF) (removed in mature form).

The protein belongs to the fasciclin-like AGP family.

The protein localises to the cell membrane. Its function is as follows. May be a cell surface adhesion protein. This chain is Fasciclin-like arabinogalactan protein 5 (FLA5), found in Arabidopsis thaliana (Mouse-ear cress).